A 349-amino-acid chain; its full sequence is Transcription factor HBP-1a (349 aa).

Positions 1 to 11 are enriched in polar residues; it reads MGSNDPSTPSK. Disordered stretches follow at residues 1-39, 101-196, 224-277, and 312-349; these read MGSN…WPGF, FHYP…NKPM, GATG…QAEC, and NTSL…QKEP. Over residues 113–124 the composition is skewed to low complexity; sequence PAGAQGAAPGAA. Over residues 174-191 the composition is skewed to polar residues; sequence NENGSAQNGVSHSSSHGT. Residues 252–315 form the bZIP domain; that stretch reads ELKKQKRKLS…EELLSKNTSL (64 aa). The interval 254–273 is basic motif; the sequence is KKQKRKLSNRESARRSRLRK. Over residues 261 to 277 the composition is skewed to basic and acidic residues; sequence SNRESARRSRLRKQAEC. The segment at 280-315 is leucine-zipper; sequence LGQRAEALKSENSSLRIELDRIKKEYEELLSKNTSL. A compositionally biased stretch (basic and acidic residues) spans 334–349; the sequence is MNERGDTNGGSHQKEP.

Belongs to the bZIP family. As to quaternary structure, binds DNA as a dimer.

The protein resides in the nucleus. Its function is as follows. Binds to the hexamer motif 5'-ACGTCA-3' of histone gene promoters. The sequence is that of Transcription factor HBP-1a from Triticum aestivum (Wheat).